Consider the following 429-residue polypeptide: Serine hydroxymethyltransferase (429 aa).

Residues leucine 126 and 130 to 132 each bind (6S)-5,6,7,8-tetrahydrofolate; that span reads GHL. An N6-(pyridoxal phosphate)lysine modification is found at lysine 235. 359–361 serves as a coordination point for (6S)-5,6,7,8-tetrahydrofolate; it reads SPF.

The protein belongs to the SHMT family. In terms of assembly, homodimer. The cofactor is pyridoxal 5'-phosphate.

The protein resides in the cytoplasm. The enzyme catalyses (6R)-5,10-methylene-5,6,7,8-tetrahydrofolate + glycine + H2O = (6S)-5,6,7,8-tetrahydrofolate + L-serine. Its pathway is one-carbon metabolism; tetrahydrofolate interconversion. It functions in the pathway amino-acid biosynthesis; glycine biosynthesis; glycine from L-serine: step 1/1. Catalyzes the reversible interconversion of serine and glycine with tetrahydrofolate (THF) serving as the one-carbon carrier. This reaction serves as the major source of one-carbon groups required for the biosynthesis of purines, thymidylate, methionine, and other important biomolecules. Also exhibits THF-independent aldolase activity toward beta-hydroxyamino acids, producing glycine and aldehydes, via a retro-aldol mechanism. In Synechococcus sp. (strain WH7803), this protein is Serine hydroxymethyltransferase.